The primary structure comprises 364 residues: 3-isopropylmalate dehydrogenase (364 aa).

79 to 92 (GSKWDHLPEIEKPE) is an NAD(+) binding site. Positions 100, 110, 139, and 227 each coordinate substrate. Asp-227, Asp-251, and Asp-255 together coordinate Mg(2+). Residue 285–297 (GSAPNIAGKTIAN) participates in NAD(+) binding.

It belongs to the isocitrate and isopropylmalate dehydrogenases family. LeuB type 1 subfamily. Homodimer. The cofactor is Mg(2+). It depends on Mn(2+) as a cofactor.

It is found in the cytoplasm. The catalysed reaction is (2R,3S)-3-isopropylmalate + NAD(+) = 4-methyl-2-oxopentanoate + CO2 + NADH. Its pathway is amino-acid biosynthesis; L-leucine biosynthesis; L-leucine from 3-methyl-2-oxobutanoate: step 3/4. Its function is as follows. Catalyzes the oxidation of 3-carboxy-2-hydroxy-4-methylpentanoate (3-isopropylmalate) to 3-carboxy-4-methyl-2-oxopentanoate. The product decarboxylates to 4-methyl-2 oxopentanoate. This Buchnera aphidicola subsp. Thelaxes suberi protein is 3-isopropylmalate dehydrogenase.